The sequence spans 140 residues: MAIERTFSILKPDATARNLTGAINAVIEEAGLRIVAQRRIRMSEAQAKTFYEVHAERPFYGELVSFMTSGPVVVQVLEGENAVAKYREVMGATNPAQAAEGTIRKKFALSVGENSVHGSDSAENAKVEIAQFFDEKDIVG.

ATP is bound by residues Lys-11, Phe-59, Arg-87, Thr-93, Arg-104, and Asn-114. Catalysis depends on His-117, which acts as the Pros-phosphohistidine intermediate.

The protein belongs to the NDK family. As to quaternary structure, homotetramer. It depends on Mg(2+) as a cofactor.

It is found in the cytoplasm. It catalyses the reaction a 2'-deoxyribonucleoside 5'-diphosphate + ATP = a 2'-deoxyribonucleoside 5'-triphosphate + ADP. It carries out the reaction a ribonucleoside 5'-diphosphate + ATP = a ribonucleoside 5'-triphosphate + ADP. In terms of biological role, major role in the synthesis of nucleoside triphosphates other than ATP. The ATP gamma phosphate is transferred to the NDP beta phosphate via a ping-pong mechanism, using a phosphorylated active-site intermediate. This chain is Nucleoside diphosphate kinase, found in Methylobacterium nodulans (strain LMG 21967 / CNCM I-2342 / ORS 2060).